Here is a 192-residue protein sequence, read N- to C-terminus: Probable thymidylate kinase (192 aa).

ATP is bound at residue 7–14; the sequence is GIDGAGKS.

It belongs to the thymidylate kinase family.

It carries out the reaction dTMP + ATP = dTDP + ADP. This chain is Probable thymidylate kinase, found in Methanobrevibacter smithii (strain ATCC 35061 / DSM 861 / OCM 144 / PS).